A 401-amino-acid polypeptide reads, in one-letter code: Serine/threonine transporter SstT (401 aa).

Helical transmembrane passes span 17–37 (IGIG…ITVI), 40–60 (FGSL…LTLV), 78–98 (VICL…GASY), 138–158 (ALAT…GLAF), 179–199 (VVGW…FDTI), 212–232 (LLLL…NPLI), 295–315 (MAGA…TLGI), and 336–356 (ASGV…LFGI).

It belongs to the dicarboxylate/amino acid:cation symporter (DAACS) (TC 2.A.23) family.

The protein resides in the cell membrane. It carries out the reaction L-serine(in) + Na(+)(in) = L-serine(out) + Na(+)(out). It catalyses the reaction L-threonine(in) + Na(+)(in) = L-threonine(out) + Na(+)(out). Functionally, involved in the import of serine and threonine into the cell, with the concomitant import of sodium (symport system). The protein is Serine/threonine transporter SstT of Streptococcus suis (strain 98HAH33).